Consider the following 90-residue polypeptide: Mitochondrial import inner membrane translocase subunit Tim10-B (90 aa).

Residues 29-54 carry the Twin CX3C motif motif; sequence CHKKCVPPHYKEAELSKGESVCLDRC. Disulfide bonds link Cys-29–Cys-54 and Cys-33–Cys-50.

This sequence belongs to the small Tim family. As to quaternary structure, heterohexamer; composed of 3 copies of TIMM9 and 3 copies of TIMM10/TIM10A, named soluble 70 kDa complex. The complex forms a 6-bladed alpha-propeller structure and associates with the TIMM22 component of the TIM22 complex. Interacts with multi-pass transmembrane proteins in transit.

Its subcellular location is the mitochondrion inner membrane. In terms of biological role, mitochondrial intermembrane chaperone that participates in the import and insertion of multi-pass transmembrane proteins into the mitochondrial inner membrane. May also be required for the transfer of beta-barrel precursors from the TOM complex to the sorting and assembly machinery (SAM complex) of the outer membrane. Acts as a chaperone-like protein that protects the hydrophobic precursors from aggregation and guide them through the mitochondrial intermembrane space. This chain is Mitochondrial import inner membrane translocase subunit Tim10-B (timm10-b), found in Xenopus laevis (African clawed frog).